A 562-amino-acid chain; its full sequence is Formate--tetrahydrofolate ligase (562 aa).

71–78 (TPAGEGKS) lines the ATP pocket.

This sequence belongs to the formate--tetrahydrofolate ligase family.

It carries out the reaction (6S)-5,6,7,8-tetrahydrofolate + formate + ATP = (6R)-10-formyltetrahydrofolate + ADP + phosphate. Its pathway is one-carbon metabolism; tetrahydrofolate interconversion. This is Formate--tetrahydrofolate ligase from Bacillus cereus (strain G9842).